Here is a 400-residue protein sequence, read N- to C-terminus: Forkhead box protein Q1 (400 aa).

A disordered region spans residues 1–112; sequence MKLEVFVPRA…EGARSKPYTR (112 aa). Over residues 32 to 54 the composition is skewed to low complexity; the sequence is LSAAGDDSLGSDGDCAANSPAAG. Gly residues-rich tracts occupy residues 55–66 and 95–104; these read SGAGDLEGGGGE and CAGGVGGGEG. The segment at residues 115 to 210 is a DNA-binding region (fork-head); sequence KPPYSYIALI…ADGVFRRRRK (96 aa). The tract at residues 213-264 is disordered; that stretch reads SHRTTVSASGLRPEEAPPGPAGTPQPAPAARSSPIARSPARQEERSSPASKF. The span at 228-239 shows a compositional bias: pro residues; that stretch reads APPGPAGTPQPA. Positions 240-251 are enriched in low complexity; it reads PAARSSPIARSP.

In terms of tissue distribution, expressed in kidney and stomach. Expression in the outer medulla of the kidney and the transitional epithelium. Expressed in the hair follicle medulla.

The protein resides in the nucleus. Plays a role in hair follicle differentiation. The sequence is that of Forkhead box protein Q1 (Foxq1) from Mus musculus (Mouse).